We begin with the raw amino-acid sequence, 343 residues long: Holliday junction branch migration complex subunit RuvB (343 aa).

Positions methionine 1 to tyrosine 178 are large ATPase domain (RuvB-L). Residues leucine 17, arginine 18, glycine 59, lysine 62, threonine 63, threonine 64, glutamate 125 to tyrosine 127, arginine 168, tyrosine 178, and arginine 215 each bind ATP. Threonine 63 is a Mg(2+) binding site. Positions threonine 179–glutamate 249 are small ATPAse domain (RuvB-S). The tract at residues lysine 252–serine 343 is head domain (RuvB-H). Arginine 307 and arginine 312 together coordinate DNA.

Belongs to the RuvB family. Homohexamer. Forms an RuvA(8)-RuvB(12)-Holliday junction (HJ) complex. HJ DNA is sandwiched between 2 RuvA tetramers; dsDNA enters through RuvA and exits via RuvB. An RuvB hexamer assembles on each DNA strand where it exits the tetramer. Each RuvB hexamer is contacted by two RuvA subunits (via domain III) on 2 adjacent RuvB subunits; this complex drives branch migration. In the full resolvosome a probable DNA-RuvA(4)-RuvB(12)-RuvC(2) complex forms which resolves the HJ.

Its subcellular location is the cytoplasm. It catalyses the reaction ATP + H2O = ADP + phosphate + H(+). In terms of biological role, the RuvA-RuvB-RuvC complex processes Holliday junction (HJ) DNA during genetic recombination and DNA repair, while the RuvA-RuvB complex plays an important role in the rescue of blocked DNA replication forks via replication fork reversal (RFR). RuvA specifically binds to HJ cruciform DNA, conferring on it an open structure. The RuvB hexamer acts as an ATP-dependent pump, pulling dsDNA into and through the RuvAB complex. RuvB forms 2 homohexamers on either side of HJ DNA bound by 1 or 2 RuvA tetramers; 4 subunits per hexamer contact DNA at a time. Coordinated motions by a converter formed by DNA-disengaged RuvB subunits stimulates ATP hydrolysis and nucleotide exchange. Immobilization of the converter enables RuvB to convert the ATP-contained energy into a lever motion, pulling 2 nucleotides of DNA out of the RuvA tetramer per ATP hydrolyzed, thus driving DNA branch migration. The RuvB motors rotate together with the DNA substrate, which together with the progressing nucleotide cycle form the mechanistic basis for DNA recombination by continuous HJ branch migration. Branch migration allows RuvC to scan DNA until it finds its consensus sequence, where it cleaves and resolves cruciform DNA. In Pseudothermotoga lettingae (strain ATCC BAA-301 / DSM 14385 / NBRC 107922 / TMO) (Thermotoga lettingae), this protein is Holliday junction branch migration complex subunit RuvB.